The chain runs to 329 residues: Short-chain dehydrogenase/reductase tropG (329 aa).

Lys-57, Asp-86, Asn-113, Tyr-203, and Lys-207 together coordinate NADP(+). Residue Tyr-203 is the Proton acceptor of the active site. The active-site Lowers pKa of active site Tyr is Lys-207.

The protein belongs to the short-chain dehydrogenases/reductases (SDR) family.

It participates in secondary metabolite biosynthesis. In terms of biological role, short-chain dehydrogenase/reductase; part of the gene cluster that mediates the biosynthesis of the tropolone class of fungal maleic anhydrides. The pathway begins with the synthesis of 3-methylorcinaldehyde by the non-reducing polyketide synthase (PKS) tropA. 3-methylorcinaldehyde is the substrate for the FAD-dependent monooxygenase tropB to yield a dearomatized hydroxycyclohexadione. The 2-oxoglutarate-dependent dioxygenase tropC then performs the oxidative ring expansion to provide the first tropolone metabolite stipitaldehyde. Trop D converts stipitaldehyde into stipitacetal which is in turn converted to stipitalide by the short-chain dehydrogenase/reductase tropE. The next steps involve tropF, tropG, tropH, tropI and tropJ to form successive tropolone maleic anhydrides including stipitaldehydic, stipitatonic and stipitatic acids. This chain is Short-chain dehydrogenase/reductase tropG, found in Talaromyces stipitatus (strain ATCC 10500 / CBS 375.48 / QM 6759 / NRRL 1006) (Penicillium stipitatum).